Consider the following 48-residue polypeptide: Large ribosomal subunit protein bL33B (48 aa).

It belongs to the bacterial ribosomal protein bL33 family.

The chain is Large ribosomal subunit protein bL33B (rpmG2) from Mycoplasma genitalium (strain ATCC 33530 / DSM 19775 / NCTC 10195 / G37) (Mycoplasmoides genitalium).